Consider the following 150-residue polypeptide: Large ribosomal subunit protein bL9 (150 aa).

The protein belongs to the bacterial ribosomal protein bL9 family.

Its function is as follows. Binds to the 23S rRNA. This is Large ribosomal subunit protein bL9 from Cupriavidus taiwanensis (strain DSM 17343 / BCRC 17206 / CCUG 44338 / CIP 107171 / LMG 19424 / R1) (Ralstonia taiwanensis (strain LMG 19424)).